The chain runs to 117 residues: Large ribosomal subunit protein bL20c (117 aa).

It belongs to the bacterial ribosomal protein bL20 family.

The protein localises to the plastid. It is found in the chloroplast. In terms of biological role, binds directly to 23S ribosomal RNA and is necessary for the in vitro assembly process of the 50S ribosomal subunit. It is not involved in the protein synthesizing functions of that subunit. The polypeptide is Large ribosomal subunit protein bL20c (Barbarea verna (Land cress)).